Here is a 462-residue protein sequence, read N- to C-terminus: Zinc finger CCCH domain-containing protein 8 (462 aa).

C3H1-type zinc fingers lie at residues 105–133 (RPGE…HPQW), 156–184 (QEGE…HPKE), 209–237 (RPSE…HPKD), 288–316 (RPGE…HPDR), 367–395 (RPGA…HPID), and 422–450 (REDA…HPPP).

This chain is Zinc finger CCCH domain-containing protein 8, found in Oryza sativa subsp. japonica (Rice).